The sequence spans 121 residues: Flagellar protein FliT (121 aa).

Residues 1 to 50 are required for homodimerization; the sequence is MNHAPHLYFAWQQLVDKSQLMLRLATEEQWDELIASEMAYVNAVQEIAHL. The fliD binding stretch occupies residues 60-98; sequence MQEQLRPMLRLILDNESKVKQLLQIRMDELAKLVGQSSV.

This sequence belongs to the FliT family. In terms of assembly, homodimer. Interacts with FliD and FlhC.

The protein localises to the cytoplasm. It is found in the cytosol. Dual-function protein that regulates the transcription of class 2 flagellar operons and that also acts as an export chaperone for the filament-capping protein FliD. As a transcriptional regulator, acts as an anti-FlhDC factor; it directly binds FlhC, thus inhibiting the binding of the FlhC/FlhD complex to class 2 promoters, resulting in decreased expression of class 2 flagellar operons. As a chaperone, effects FliD transition to the membrane by preventing its premature polymerization, and by directing it to the export apparatus. In Shigella sonnei (strain Ss046), this protein is Flagellar protein FliT.